Here is a 72-residue protein sequence, read N- to C-terminus: Small ribosomal subunit protein bS18 (72 aa).

It belongs to the bacterial ribosomal protein bS18 family. In terms of assembly, part of the 30S ribosomal subunit. Forms a tight heterodimer with protein bS6.

Binds as a heterodimer with protein bS6 to the central domain of the 16S rRNA, where it helps stabilize the platform of the 30S subunit. This Fusobacterium nucleatum subsp. nucleatum (strain ATCC 25586 / DSM 15643 / BCRC 10681 / CIP 101130 / JCM 8532 / KCTC 2640 / LMG 13131 / VPI 4355) protein is Small ribosomal subunit protein bS18.